Consider the following 87-residue polypeptide: Toxin Cll3 (87 aa).

A signal peptide spans 1–19 (MNSLLMITACLAVIGTVWA). The region spanning 20 to 85 (KEGYIVNYYD…VWPLPNKTCY (66 aa)) is the LCN-type CS-alpha/beta domain. Intrachain disulfides connect Cys-31/Cys-84, Cys-35/Cys-60, Cys-44/Cys-65, and Cys-48/Cys-67. The residue at position 85 (Tyr-85) is a Tyrosine amide.

It belongs to the long (4 C-C) scorpion toxin superfamily. Sodium channel inhibitor family. Beta subfamily. As to expression, expressed by the venom gland.

It localises to the secreted. Beta toxins bind voltage-independently at site-4 of sodium channels (Nav) and shift the voltage of activation toward more negative potentials thereby affecting sodium channel activation and promoting spontaneous and repetitive firing. The chain is Toxin Cll3 from Centruroides limpidus (Mexican scorpion).